A 239-amino-acid polypeptide reads, in one-letter code: Pyridoxal 5'-phosphate synthase subunit PdxS (239 aa).

Aspartate 21 provides a ligand contact to D-ribose 5-phosphate. Lysine 78 serves as the catalytic Schiff-base intermediate with D-ribose 5-phosphate. A D-ribose 5-phosphate-binding site is contributed by glycine 150. Arginine 162 contributes to the D-glyceraldehyde 3-phosphate binding site. D-ribose 5-phosphate is bound by residues glycine 211 and 232-233 (GS).

This sequence belongs to the PdxS/SNZ family. In the presence of PdxT, forms a dodecamer of heterodimers.

The catalysed reaction is aldehydo-D-ribose 5-phosphate + D-glyceraldehyde 3-phosphate + L-glutamine = pyridoxal 5'-phosphate + L-glutamate + phosphate + 3 H2O + H(+). It functions in the pathway cofactor biosynthesis; pyridoxal 5'-phosphate biosynthesis. In terms of biological role, catalyzes the formation of pyridoxal 5'-phosphate from ribose 5-phosphate (RBP), glyceraldehyde 3-phosphate (G3P) and ammonia. The ammonia is provided by the PdxT subunit. Can also use ribulose 5-phosphate and dihydroxyacetone phosphate as substrates, resulting from enzyme-catalyzed isomerization of RBP and G3P, respectively. The polypeptide is Pyridoxal 5'-phosphate synthase subunit PdxS (Francisella tularensis).